The following is a 102-amino-acid chain: Matrix Gla protein (102 aa).

A phosphoserine mark is found at Ser2, Ser3, and Ser5. Positions 18–45 are disordered; it reads DANSFMRQPRPPNHWDSRDRFKSPRERT. A Gla domain is found at 27-73; the sequence is RPPNHWDSRDRFKSPRERTREKCEEYRPCERLARQVGLKRAYGKYFG. The span at 30-45 shows a compositional bias: basic and acidic residues; sequence NHWDSRDRFKSPRERT. A 4-carboxyglutamate mark is found at Glu43, Glu47, Glu50, and Glu51. Cys49 and Cys55 are disulfide-bonded. The tract at residues 72–102 is disordered; the sequence is FGNRRQRPSTSGRLRPRKYRASRYRNHHYRY. Over residues 85-102 the composition is skewed to basic residues; sequence LRPRKYRASRYRNHHYRY.

The protein belongs to the osteocalcin/matrix Gla protein family. Requires vitamin K-dependent gamma-carboxylation for its function. As to expression, accounts for 35-40% of the total protein in the acid demineralization extract of calcified cartilage.

The protein localises to the secreted. Associates with the organic matrix of calcified cartilage. In Galeorhinus galeus (Tope shark), this protein is Matrix Gla protein (mgp).